A 176-amino-acid chain; its full sequence is Protein GrpE (176 aa).

The tract at residues 1-28 (MSEQKQEFENENAENSEHLQDENLQNIE) is disordered.

It belongs to the GrpE family. Homodimer.

The protein localises to the cytoplasm. In terms of biological role, participates actively in the response to hyperosmotic and heat shock by preventing the aggregation of stress-denatured proteins, in association with DnaK and GrpE. It is the nucleotide exchange factor for DnaK and may function as a thermosensor. Unfolded proteins bind initially to DnaJ; upon interaction with the DnaJ-bound protein, DnaK hydrolyzes its bound ATP, resulting in the formation of a stable complex. GrpE releases ADP from DnaK; ATP binding to DnaK triggers the release of the substrate protein, thus completing the reaction cycle. Several rounds of ATP-dependent interactions between DnaJ, DnaK and GrpE are required for fully efficient folding. This Campylobacter jejuni subsp. jejuni serotype O:2 (strain ATCC 700819 / NCTC 11168) protein is Protein GrpE.